A 232-amino-acid chain; its full sequence is 5'-methylthioadenosine/S-adenosylhomocysteine nucleosidase (232 aa).

Glu-12 (proton acceptor) is an active-site residue. Residues Gly-78, Ile-152, and 173–174 (ME) each bind substrate. Residue Asp-197 is the Proton donor of the active site.

This sequence belongs to the PNP/UDP phosphorylase family. MtnN subfamily. Homodimer.

The catalysed reaction is S-adenosyl-L-homocysteine + H2O = S-(5-deoxy-D-ribos-5-yl)-L-homocysteine + adenine. It carries out the reaction S-methyl-5'-thioadenosine + H2O = 5-(methylsulfanyl)-D-ribose + adenine. It catalyses the reaction 5'-deoxyadenosine + H2O = 5-deoxy-D-ribose + adenine. The protein operates within amino-acid biosynthesis; L-methionine biosynthesis via salvage pathway; S-methyl-5-thio-alpha-D-ribose 1-phosphate from S-methyl-5'-thioadenosine (hydrolase route): step 1/2. In terms of biological role, catalyzes the irreversible cleavage of the glycosidic bond in both 5'-methylthioadenosine (MTA) and S-adenosylhomocysteine (SAH/AdoHcy) to adenine and the corresponding thioribose, 5'-methylthioribose and S-ribosylhomocysteine, respectively. Also cleaves 5'-deoxyadenosine, a toxic by-product of radical S-adenosylmethionine (SAM) enzymes, into 5-deoxyribose and adenine. Thus, is required for in vivo function of the radical SAM enzymes biotin synthase and lipoic acid synthase, that are inhibited by 5'-deoxyadenosine accumulation. The sequence is that of 5'-methylthioadenosine/S-adenosylhomocysteine nucleosidase from Escherichia fergusonii (strain ATCC 35469 / DSM 13698 / CCUG 18766 / IAM 14443 / JCM 21226 / LMG 7866 / NBRC 102419 / NCTC 12128 / CDC 0568-73).